Reading from the N-terminus, the 620-residue chain is MNVISCSFSLEHNLYETMSCLQRCSKQEELKQIHARMLKTGLMQDSYAITKFLSFCISSTSSDFLPYAQIVFDGFDRPDTFLWNLMIRGFSCSDEPERSLLLYQRMLCSSAPHNAYTFPSLLKACSNLSAFEETTQIHAQITKLGYENDVYAVNSLINSYAVTGNFKLAHLLFDRIPEPDDVSWNSVIKGYVKAGKMDIALTLFRKMAEKNAISWTTMISGYVQADMNKEALQLFHEMQNSDVEPDNVSLANALSACAQLGALEQGKWIHSYLNKTRIRMDSVLGCVLIDMYAKCGEMEEALEVFKNIKKKSVQAWTALISGYAYHGHGREAISKFMEMQKMGIKPNVITFTAVLTACSYTGLVEEGKLIFYSMERDYNLKPTIEHYGCIVDLLGRAGLLDEAKRFIQEMPLKPNAVIWGALLKACRIHKNIELGEEIGEILIAIDPYHGGRYVHKANIHAMDKKWDKAAETRRLMKEQGVAKVPGCSTISLEGTTHEFLAGDRSHPEIEKIQSKWRIMRRKLEENGYVPELEEMLLDLVDDDEREAIVHQHSEKLAITYGLIKTKPGTIIRIMKNLRVCKDCHKVTKLISKIYKRDIVMRDRTRFHHFRDGKCSCGDYW.

PPR repeat units follow at residues 79–113 (DTFL…SAPH), 114–148 (NAYT…GYEN), 149–179 (DVYA…IPEP), 180–210 (DDVS…MAEK), 211–245 (NAIS…DVEP), 246–280 (DNVS…RIRM), 281–311 (DSVL…IKKK), 312–346 (SVQA…GIKP), 347–382 (NVIT…NLKP), and 383–413 (TIEH…MPLK). Residues 418-493 (IWGALLKACR…VPGCSTISLE (76 aa)) form a type E motif region. Residues 494–524 (GTTHEFLAGDRSHPEIEKIQSKWRIMRRKLE) are type E(+) motif. The tract at residues 525-620 (ENGYVPELEE…DGKCSCGDYW (96 aa)) is type DYW motif.

The protein belongs to the PPR family. PCMP-H subfamily.

The polypeptide is Pentatricopeptide repeat-containing protein At5g66520 (PCMP-H61) (Arabidopsis thaliana (Mouse-ear cress)).